The primary structure comprises 405 residues: Potassium channel subfamily K member 13 (405 aa).

Over Met1–Arg19 the chain is Cytoplasmic. A helical membrane pass occupies residues Phe20–Ala40. Residues Asn59 and Asn65 are each glycosylated (N-linked (GlcNAc...) asparagine). The segment at residues Trp95–Met115 is an intramembrane region (pore-forming). Positions 110, 111, and 112 each coordinate K(+). The interval Thr110 to Met115 is selectivity filter 1. Residues Ile125–Phe145 traverse the membrane as a helical segment. Residues Leu146 to Ser193 lie on the Cytoplasmic side of the membrane. A helical membrane pass occupies residues Val194–Ala214. An intramembrane region (pore-forming) is located at residues Tyr224 to Val244. Positions 237, 238, 239, and 240 each coordinate K(+). A selectivity filter 2 region spans residues Thr237–Asp242. Residues Phe263–Ile283 form a helical membrane-spanning segment. The Cytoplasmic segment spans residues Lys284–Arg405.

It belongs to the two pore domain potassium channel (TC 1.A.1.8) family. In terms of assembly, homodimer. Heterodimer with KCNK12.

Its subcellular location is the cell membrane. It catalyses the reaction K(+)(in) = K(+)(out). K(+) channel that conducts outward rectifying tonic currents potentiated by purinergic signals. Homo- and heterodimerizes to form functional channels with distinct regulatory and gating properties. Contributes most of K(+) currents at the plasma membrane of resting microglia. Maintains a depolarized membrane potential required for proper ramified microglia morphology and phagocytosis, selectively mediating microglial pruning of presynaptic compartments at hippocampal excitatory synapses. Upon local release of ATP caused by neuronal injury or infection, it is potentiated by P2RY12 and P2RX7 receptor signaling and contributes to ATP-triggered K(+) efflux underlying microglial NLRP3 inflammasome assembly and IL1B release. This Mus musculus (Mouse) protein is Potassium channel subfamily K member 13.